The primary structure comprises 936 residues: Calcium homeostasis endoplasmic reticulum protein (936 aa).

Residue methionine 1 is modified to N-acetylmethionine. One copy of the SURP motif repeat lies at 15–57 (VIDKLAQFVARNGPEFEKMTMEKQKDNPKFSFLFGGEFYSYYK). An N6-acetyllysine modification is found at lysine 18. A disordered region spans residues 77–102 (EPTSAMPPLPQPPLAPTASLTPAQGT). Over residues 81–91 (AMPPLPQPPLA) the composition is skewed to pro residues. The 141-residue stretch at 149–289 (ETQLDMSEFD…QLQSPALGLG (141 aa)) folds into the CID domain. Positions 328 to 646 (LAQQQQQQQQ…RQGPPHINHD (319 aa)) are disordered. Over residues 330–355 (QQQQQQQQQQQQQPQPQPQPQIQLPQ) the composition is skewed to low complexity. A compositionally biased stretch (pro residues) spans 363 to 383 (TPPPPAPPPASAPAPTIPPTT). Over residues 395–405 (PGSSEYDTSAG) the composition is skewed to polar residues. Positions 488–500 (PWNNQPDPNWNNQ) are enriched in low complexity. Pro residues predominate over residues 534–550 (PFPPHQQHPQFNQPPHP). The segment covering 551–560 (HNFNRFPPRF) has biased composition (low complexity). The span at 561 to 572 (MQDDFPPRHPFE) shows a compositional bias: basic and acidic residues. Residues 594–603 (PHHHPGHRMP) are compositionally biased toward basic residues. Tyrosine 723 is modified (phosphotyrosine). Residues 731-887 (RARRRKGQEK…DPIKGGDVRD (157 aa)) are disordered. The segment covering 748–758 (SRSRSKSRGRS) has biased composition (basic residues). Residues 759-773 (SSRSSSRSSKSSRSS) are compositionally biased toward low complexity. A compositionally biased stretch (basic residues) spans 774–824 (SRSHSRSRSRSSSRSRSRSRSRSRSSRSRSRSRSRSRSKSYSPGRRRRSRS). Serine 822, serine 824, and serine 826 each carry phosphoserine. Threonine 828 is subject to Phosphothreonine. Serine 837 carries the post-translational modification Phosphoserine. The G-patch domain occupies 850 to 900 (EENKGHQMLVKMGWSGSGGLGAKEQGIQDPIKGGDVRDKWDQYKGVGVALD). Lysine 853 participates in a covalent cross-link: Glycyl lysine isopeptide (Lys-Gly) (interchain with G-Cter in SUMO2). Residues serine 864 and serine 866 each carry the phosphoserine modification. Residue lysine 881 forms a Glycyl lysine isopeptide (Lys-Gly) (interchain with G-Cter in SUMO2) linkage. Lysine 888 is subject to N6-acetyllysine. Position 913 is a phosphoserine (serine 913).

It localises to the cytoplasm. Its subcellular location is the perinuclear region. The protein resides in the endoplasmic reticulum. Its function is as follows. Involved in calcium homeostasis, growth and proliferation. This Mus musculus (Mouse) protein is Calcium homeostasis endoplasmic reticulum protein.